Reading from the N-terminus, the 379-residue chain is Pentatricopeptide repeat-containing protein At3g25210, mitochondrial (379 aa).

6 PPR repeats span residues 142-177 (SVPLYNCIIRFCCGRKFLFNRAFDVYNKMLRSDDSK), 179-221 (DLET…GVIP), 222-256 (DTFVLNMIIKAYAKCLEVDEAIRVFKEMALYGSEP), 257-291 (NAYTYSYLVKGVCEKGRVGQGLGFYKEMQVKGMVP), 292-326 (NGSCYMVLICSLSMERRLDEAVEVVYDMLANSLSP), and 327-361 (DMLTYNTVLTELCRGGRGSEALEMVEEWKKRDPVM).

Belongs to the PPR family. P subfamily.

It is found in the mitochondrion. The chain is Pentatricopeptide repeat-containing protein At3g25210, mitochondrial from Arabidopsis thaliana (Mouse-ear cress).